The sequence spans 401 residues: S-adenosylmethionine synthase (401 aa).

136-141 (GQGSVD) is a binding site for ATP.

Belongs to the AdoMet synthase 2 family. Requires Mg(2+) as cofactor.

The enzyme catalyses L-methionine + ATP + H2O = S-adenosyl-L-methionine + phosphate + diphosphate. It functions in the pathway amino-acid biosynthesis; S-adenosyl-L-methionine biosynthesis; S-adenosyl-L-methionine from L-methionine: step 1/1. Catalyzes the formation of S-adenosylmethionine from methionine and ATP. The polypeptide is S-adenosylmethionine synthase (mat) (Pyrococcus abyssi (strain GE5 / Orsay)).